We begin with the raw amino-acid sequence, 21 residues long: Venom nerve growth factor Bco12 (21 aa).

It belongs to the NGF-beta family. Homodimer; non-covalently linked. Glycosylated. In terms of tissue distribution, expressed by the venom gland.

It is found in the secreted. In terms of biological role, nerve growth factor is important for the development and maintenance of the sympathetic and sensory nervous systems. It stimulates division and differentiation of sympathetic and embryonic sensory neurons as well as basal forebrain cholinergic neurons in the brain. Its relevance in the snake venom is not clear. However, it has been shown to inhibit metalloproteinase-dependent proteolysis of platelet glycoprotein Ib alpha, suggesting a metalloproteinase inhibition to prevent metalloprotease autodigestion and/or protection against prey proteases. Binds a lipid between the two protein chains in the homodimer. The lipid-bound form promotes histamine relase from mouse mast cells, contrary to the lipid-free form. The sequence is that of Venom nerve growth factor Bco12 from Bothrops cotiara (Cotiara).